Consider the following 289-residue polypeptide: MAIVTLLALQFTSPGPTLVEIGPLSIRWYGLLIASAVLLGISLSSRLARRRDIDPNAIADLAVWLVIGAIPAARLYYVAFEWQQYASRPAEILAIWHGGIAIHGAILGGTAALILFARRRQIPIWQLTDVVVPSLALGQAIGRWGNFFNSEAFGTPTDLPWKLFIPIDRRPLAYIQSEYFHPTFLYESLWNLLLCLLLIWLFRQGLRQRLPLKAGVMTCIYLIGYSLGRIWIEGLRTDSLMLGSLRIAQMVSIVAIAFGVLGLVWIYGLKRSLPDVVRPAISGESRSEL.

Helical transmembrane passes span 21 to 41, 53 to 73, 95 to 115, and 122 to 142; these read IGPL…LLGI, IDPN…IPAA, IWHG…ALIL, and IPIW…QAIG. Residue R143 coordinates a 1,2-diacyl-sn-glycero-3-phospho-(1'-sn-glycerol). 3 helical membrane-spanning segments follow: residues 182–202, 215–235, and 247–267; these read PTFL…IWLF, GVMT…IEGL, and IAQM…VWIY.

This sequence belongs to the Lgt family.

It is found in the cell inner membrane. The catalysed reaction is L-cysteinyl-[prolipoprotein] + a 1,2-diacyl-sn-glycero-3-phospho-(1'-sn-glycerol) = an S-1,2-diacyl-sn-glyceryl-L-cysteinyl-[prolipoprotein] + sn-glycerol 1-phosphate + H(+). The protein operates within protein modification; lipoprotein biosynthesis (diacylglyceryl transfer). Its function is as follows. Catalyzes the transfer of the diacylglyceryl group from phosphatidylglycerol to the sulfhydryl group of the N-terminal cysteine of a prolipoprotein, the first step in the formation of mature lipoproteins. The sequence is that of Phosphatidylglycerol--prolipoprotein diacylglyceryl transferase from Synechococcus elongatus (strain ATCC 33912 / PCC 7942 / FACHB-805) (Anacystis nidulans R2).